A 437-amino-acid chain; its full sequence is Inactive peptidyl-prolyl cis-trans isomerase shutdown (437 aa).

In terms of domain architecture, PPIase FKBP-type spans 92-178; it reads DSEVTIHYAA…RPEPALFVIV (87 aa). TPR repeat units follow at residues 209–242, 258–294, and 295–327; these read VNALRADAKELYKKKKYVKAIKNYQQAISVLRLS, VNAYLNLAVCYYKTNKPKHVLNMCECLDRLIDTEKHC, and KALYYYGKAHEMLGKTEMAIKYYKKALKLEPKN.

Belongs to the FKBP6 family. Interacts with Hsp83.

It is found in the cytoplasm. Functionally, co-chaperone required during oogenesis to repress transposable elements and prevent their mobilization, which is essential for the germline integrity. Acts via the piRNA metabolic process, which mediates the repression of transposable elements during meiosis by forming complexes composed of piRNAs and Piwi proteins and govern the methylation and subsequent repression of transposons. Acts as a co-chaperone via its interaction with Hsp83/HSP90 and is required for the biogenesis of all three piRNA major populations. The protein is Inactive peptidyl-prolyl cis-trans isomerase shutdown (shu) of Bombyx mori (Silk moth).